Consider the following 513-residue polypeptide: Bifunctional purine biosynthesis protein PurH (513 aa).

The MGS-like domain maps to 1–144; that stretch reads MKRALISVSD…KNYQDVTVVT (144 aa).

The protein belongs to the PurH family.

The enzyme catalyses (6R)-10-formyltetrahydrofolate + 5-amino-1-(5-phospho-beta-D-ribosyl)imidazole-4-carboxamide = 5-formamido-1-(5-phospho-D-ribosyl)imidazole-4-carboxamide + (6S)-5,6,7,8-tetrahydrofolate. The catalysed reaction is IMP + H2O = 5-formamido-1-(5-phospho-D-ribosyl)imidazole-4-carboxamide. It participates in purine metabolism; IMP biosynthesis via de novo pathway; 5-formamido-1-(5-phospho-D-ribosyl)imidazole-4-carboxamide from 5-amino-1-(5-phospho-D-ribosyl)imidazole-4-carboxamide (10-formyl THF route): step 1/1. It functions in the pathway purine metabolism; IMP biosynthesis via de novo pathway; IMP from 5-formamido-1-(5-phospho-D-ribosyl)imidazole-4-carboxamide: step 1/1. This chain is Bifunctional purine biosynthesis protein PurH, found in Lactobacillus acidophilus (strain ATCC 700396 / NCK56 / N2 / NCFM).